The following is a 427-amino-acid chain: Branched-chain-amino-acid aminotransferase, mitochondrial (427 aa).

Residues 1 to 47 (MSLMFLRRAGNIKGRNIRFALQRGSVGYSQQSSEACKNFLNTTQLRT) constitute a mitochondrion transit peptide. Residue Lys256 is modified to N6-(pyridoxal phosphate)lysine.

The protein belongs to the class-IV pyridoxal-phosphate-dependent aminotransferase family. Requires pyridoxal 5'-phosphate as cofactor.

The protein resides in the mitochondrion. The protein localises to the nucleus. It is found in the cytoplasm. The catalysed reaction is L-leucine + 2-oxoglutarate = 4-methyl-2-oxopentanoate + L-glutamate. It carries out the reaction L-isoleucine + 2-oxoglutarate = (S)-3-methyl-2-oxopentanoate + L-glutamate. The enzyme catalyses L-valine + 2-oxoglutarate = 3-methyl-2-oxobutanoate + L-glutamate. Its function is as follows. Catalyzes the first reaction in the catabolism of the essential branched chain amino acids leucine, isoleucine, and valine. This chain is Branched-chain-amino-acid aminotransferase, mitochondrial (eca39), found in Schizosaccharomyces pombe (strain 972 / ATCC 24843) (Fission yeast).